The primary structure comprises 216 residues: Large ribosomal subunit protein bL21 (216 aa).

Belongs to the bacterial ribosomal protein bL21 family. In terms of assembly, part of the 50S ribosomal subunit. Contacts protein L20.

Functionally, this protein binds to 23S rRNA in the presence of protein L20. In Roseobacter denitrificans (strain ATCC 33942 / OCh 114) (Erythrobacter sp. (strain OCh 114)), this protein is Large ribosomal subunit protein bL21.